The sequence spans 527 residues: Flavonoid 3',5'-hydroxylase CYP75B138 (527 aa).

Residues 6-26 traverse the membrane as a helical segment; sequence LDIILFISAIVFLSIYYYNLF. Position 459 (cysteine 459) interacts with heme.

This sequence belongs to the cytochrome P450 family. Heme serves as cofactor. In terms of tissue distribution, expressed in young cromes.

The protein resides in the membrane. The catalysed reaction is a 3',5'-unsubstituted flavanone + 2 reduced [NADPH--hemoprotein reductase] + 2 O2 = a 3',5'-dihydroxyflavanone + 2 oxidized [NADPH--hemoprotein reductase] + 2 H2O + 2 H(+). The enzyme catalyses (2S)-naringenin + 2 reduced [NADPH--hemoprotein reductase] + 2 O2 = (2S)-dihydrotricetin + 2 oxidized [NADPH--hemoprotein reductase] + 2 H2O + 2 H(+). It catalyses the reaction (2R,3R)-dihydrokaempferol + 2 reduced [NADPH--hemoprotein reductase] + 2 O2 = (2R,3R)-dihydromyricetin + 2 oxidized [NADPH--hemoprotein reductase] + 2 H2O + 2 H(+). It carries out the reaction kaempferol + 2 reduced [NADPH--hemoprotein reductase] + 2 O2 = myricetin + 2 oxidized [NADPH--hemoprotein reductase] + 2 H2O + 2 H(+). It functions in the pathway flavonoid metabolism. Functionally, flavonoid 3',5'-hydroxylase that catalyzes the 3'- and 5'-hydroxylation of flavanones, dihydroflavonols and flavonols. Converts narigenin to dihydrotricetin, dihydrokaempferol to dihydromyricetin and kaempferol to myricetin. In Crocosmia x crocosmiiflora (Montbretia), this protein is Flavonoid 3',5'-hydroxylase CYP75B138.